A 375-amino-acid polypeptide reads, in one-letter code: Succinyl-diaminopimelate desuccinylase (375 aa).

Histidine 66 lines the Zn(2+) pocket. Residue aspartate 68 is part of the active site. Zn(2+) is bound at residue aspartate 99. Glutamate 133 functions as the Proton acceptor in the catalytic mechanism. Residues glutamate 134, glutamate 162, and histidine 348 each contribute to the Zn(2+) site.

Belongs to the peptidase M20A family. DapE subfamily. Homodimer. It depends on Zn(2+) as a cofactor. The cofactor is Co(2+).

The enzyme catalyses N-succinyl-(2S,6S)-2,6-diaminopimelate + H2O = (2S,6S)-2,6-diaminopimelate + succinate. The protein operates within amino-acid biosynthesis; L-lysine biosynthesis via DAP pathway; LL-2,6-diaminopimelate from (S)-tetrahydrodipicolinate (succinylase route): step 3/3. In terms of biological role, catalyzes the hydrolysis of N-succinyl-L,L-diaminopimelic acid (SDAP), forming succinate and LL-2,6-diaminopimelate (DAP), an intermediate involved in the bacterial biosynthesis of lysine and meso-diaminopimelic acid, an essential component of bacterial cell walls. This is Succinyl-diaminopimelate desuccinylase from Aeromonas hydrophila subsp. hydrophila (strain ATCC 7966 / DSM 30187 / BCRC 13018 / CCUG 14551 / JCM 1027 / KCTC 2358 / NCIMB 9240 / NCTC 8049).